Here is a 433-residue protein sequence, read N- to C-terminus: Enolase (433 aa).

Position 167 (Gln167) interacts with (2R)-2-phosphoglycerate. Glu209 acts as the Proton donor in catalysis. The Mg(2+) site is built by Asp246, Glu291, and Asp318. Residues Lys343, Arg372, Ser373, and Lys394 each contribute to the (2R)-2-phosphoglycerate site. The active-site Proton acceptor is the Lys343.

The protein belongs to the enolase family. Component of the RNA degradosome, a multiprotein complex involved in RNA processing and mRNA degradation. The cofactor is Mg(2+).

It is found in the cytoplasm. The protein localises to the secreted. The protein resides in the cell surface. It carries out the reaction (2R)-2-phosphoglycerate = phosphoenolpyruvate + H2O. Its pathway is carbohydrate degradation; glycolysis; pyruvate from D-glyceraldehyde 3-phosphate: step 4/5. Catalyzes the reversible conversion of 2-phosphoglycerate (2-PG) into phosphoenolpyruvate (PEP). It is essential for the degradation of carbohydrates via glycolysis. This chain is Enolase, found in Marinomonas sp. (strain MWYL1).